The following is a 212-amino-acid chain: Probable nicotinate-nucleotide adenylyltransferase (212 aa).

The protein belongs to the NadD family.

It carries out the reaction nicotinate beta-D-ribonucleotide + ATP + H(+) = deamido-NAD(+) + diphosphate. It functions in the pathway cofactor biosynthesis; NAD(+) biosynthesis; deamido-NAD(+) from nicotinate D-ribonucleotide: step 1/1. Its function is as follows. Catalyzes the reversible adenylation of nicotinate mononucleotide (NaMN) to nicotinic acid adenine dinucleotide (NaAD). The sequence is that of Probable nicotinate-nucleotide adenylyltransferase from Mycobacterium avium (strain 104).